The sequence spans 381 residues: Homoserine O-succinyltransferase (381 aa).

In terms of domain architecture, AB hydrolase-1 spans 45–360 (NAVLVCHALN…PHGHDAFLLD (316 aa)). Serine 151 serves as the catalytic Nucleophile. Arginine 221 is a binding site for substrate. Residues aspartate 321 and histidine 354 contribute to the active site. A substrate-binding site is contributed by aspartate 355.

Belongs to the AB hydrolase superfamily. MetX family. Homodimer.

It is found in the cytoplasm. It carries out the reaction L-homoserine + succinyl-CoA = O-succinyl-L-homoserine + CoA. The protein operates within amino-acid biosynthesis; L-methionine biosynthesis via de novo pathway; O-succinyl-L-homoserine from L-homoserine: step 1/1. Transfers a succinyl group from succinyl-CoA to L-homoserine, forming succinyl-L-homoserine. This Burkholderia lata (strain ATCC 17760 / DSM 23089 / LMG 22485 / NCIMB 9086 / R18194 / 383) protein is Homoserine O-succinyltransferase.